Here is a 291-residue protein sequence, read N- to C-terminus: tRNA U34 carboxymethyltransferase (291 aa).

Residues Lys-61, Trp-75, Lys-80, Gly-100, Asp-122 to Ser-124, Val-149 to Glu-150, Tyr-169, and Arg-284 each bind carboxy-S-adenosyl-L-methionine.

It belongs to the class I-like SAM-binding methyltransferase superfamily. CmoB family. Homotetramer.

It catalyses the reaction carboxy-S-adenosyl-L-methionine + 5-hydroxyuridine(34) in tRNA = 5-carboxymethoxyuridine(34) in tRNA + S-adenosyl-L-homocysteine + H(+). In terms of biological role, catalyzes carboxymethyl transfer from carboxy-S-adenosyl-L-methionine (Cx-SAM) to 5-hydroxyuridine (ho5U) to form 5-carboxymethoxyuridine (cmo5U) at position 34 in tRNAs. This is tRNA U34 carboxymethyltransferase from Campylobacter jejuni subsp. jejuni serotype O:2 (strain ATCC 700819 / NCTC 11168).